An 82-amino-acid chain; its full sequence is Small ribosomal subunit protein bS18 (82 aa).

It belongs to the bacterial ribosomal protein bS18 family. In terms of assembly, part of the 30S ribosomal subunit. Forms a tight heterodimer with protein bS6.

In terms of biological role, binds as a heterodimer with protein bS6 to the central domain of the 16S rRNA, where it helps stabilize the platform of the 30S subunit. The polypeptide is Small ribosomal subunit protein bS18 (Methylobacterium nodulans (strain LMG 21967 / CNCM I-2342 / ORS 2060)).